The following is a 248-amino-acid chain: Cell division protein ZapD (248 aa).

Belongs to the ZapD family. As to quaternary structure, interacts with FtsZ.

Its subcellular location is the cytoplasm. Cell division factor that enhances FtsZ-ring assembly. Directly interacts with FtsZ and promotes bundling of FtsZ protofilaments, with a reduction in FtsZ GTPase activity. This chain is Cell division protein ZapD, found in Aliivibrio salmonicida (strain LFI1238) (Vibrio salmonicida (strain LFI1238)).